The chain runs to 906 residues: Protein translocase subunit SecA (906 aa).

ATP contacts are provided by residues Gln89, 107–111 (GEGKT), and Asp502. Zn(2+) is bound by residues Cys890, Cys892, Cys901, and His902.

Belongs to the SecA family. As to quaternary structure, monomer and homodimer. Part of the essential Sec protein translocation apparatus which comprises SecA, SecYEG and auxiliary proteins SecDF-YajC and YidC. Requires Zn(2+) as cofactor.

The protein resides in the cell inner membrane. The protein localises to the cytoplasm. It carries out the reaction ATP + H2O + cellular proteinSide 1 = ADP + phosphate + cellular proteinSide 2.. Functionally, part of the Sec protein translocase complex. Interacts with the SecYEG preprotein conducting channel. Has a central role in coupling the hydrolysis of ATP to the transfer of proteins into and across the cell membrane, serving both as a receptor for the preprotein-SecB complex and as an ATP-driven molecular motor driving the stepwise translocation of polypeptide chains across the membrane. This Brucella canis (strain ATCC 23365 / NCTC 10854 / RM-666) protein is Protein translocase subunit SecA.